The following is a 233-amino-acid chain: Uridylate kinase (233 aa).

9–10 (GS) lines the ATP pocket. Gly-43 lines the UMP pocket. Gly-44 and Arg-48 together coordinate ATP. UMP-binding positions include Asp-65 and 113–119 (VTPGQTT). The ATP site is built by Thr-139, Tyr-145, and Asp-148.

It belongs to the UMP kinase family. As to quaternary structure, homohexamer.

It is found in the cytoplasm. It catalyses the reaction UMP + ATP = UDP + ADP. It participates in pyrimidine metabolism; CTP biosynthesis via de novo pathway; UDP from UMP (UMPK route): step 1/1. Its activity is regulated as follows. Inhibited by UTP. In terms of biological role, catalyzes the reversible phosphorylation of UMP to UDP. The sequence is that of Uridylate kinase from Methanosarcina barkeri (strain Fusaro / DSM 804).